The primary structure comprises 152 residues: MIKVKIVRLNQKAILPVYATAHAAGMDVSACLDAPVTVPSSASALIPTGFAIELPEGYEAQLRPRSGLALRHCISLPNSPATIDADYRGEVGVILINHGREPFTVSHGDRIAQMVVAKVDHVVFEEVESLSETARGEGGFGHTGVQAKAECL.

Substrate-binding positions include 65 to 67 (RSG), Asn-78, and 82 to 84 (TID).

Belongs to the dUTPase family. Mg(2+) is required as a cofactor.

The enzyme catalyses dUTP + H2O = dUMP + diphosphate + H(+). Its pathway is pyrimidine metabolism; dUMP biosynthesis; dUMP from dCTP (dUTP route): step 2/2. Its function is as follows. This enzyme is involved in nucleotide metabolism: it produces dUMP, the immediate precursor of thymidine nucleotides and it decreases the intracellular concentration of dUTP so that uracil cannot be incorporated into DNA. The sequence is that of Deoxyuridine 5'-triphosphate nucleotidohydrolase from Chlorobaculum tepidum (strain ATCC 49652 / DSM 12025 / NBRC 103806 / TLS) (Chlorobium tepidum).